The chain runs to 430 residues: Phosphomethylpyrimidine synthase (430 aa).

Substrate is bound by residues N67, M96, Y125, H161, 183–185, 224–227, and E263; these read SRG and DALR. H267 provides a ligand contact to Zn(2+). Y290 serves as a coordination point for substrate. Residue H331 coordinates Zn(2+). [4Fe-4S] cluster contacts are provided by C406, C409, and C413.

It belongs to the ThiC family. Homodimer. It depends on [4Fe-4S] cluster as a cofactor.

The enzyme catalyses 5-amino-1-(5-phospho-beta-D-ribosyl)imidazole + S-adenosyl-L-methionine = 4-amino-2-methyl-5-(phosphooxymethyl)pyrimidine + CO + 5'-deoxyadenosine + formate + L-methionine + 3 H(+). It functions in the pathway cofactor biosynthesis; thiamine diphosphate biosynthesis. Catalyzes the synthesis of the hydroxymethylpyrimidine phosphate (HMP-P) moiety of thiamine from aminoimidazole ribotide (AIR) in a radical S-adenosyl-L-methionine (SAM)-dependent reaction. This Campylobacter jejuni subsp. jejuni serotype O:2 (strain ATCC 700819 / NCTC 11168) protein is Phosphomethylpyrimidine synthase.